A 235-amino-acid chain; its full sequence is Putative quercetin 2,3-dioxygenase ZMO1337 (235 aa).

Positions 57, 59, 101, and 103 each coordinate a divalent metal cation.

This sequence belongs to the pirin family. It depends on a divalent metal cation as a cofactor.

It carries out the reaction quercetin + O2 = 2-(3,4-dihydroxybenzoyloxy)-4,6-dihydroxybenzoate + CO. It functions in the pathway flavonoid metabolism; quercetin degradation. In terms of biological role, putative quercetin 2,3-dioxygenase. The sequence is that of Putative quercetin 2,3-dioxygenase ZMO1337 from Zymomonas mobilis subsp. mobilis (strain ATCC 31821 / ZM4 / CP4).